The following is a 360-amino-acid chain: Peptide chain release factor 1 (360 aa).

Gln-235 is subject to N5-methylglutamine. A compositionally biased stretch (basic and acidic residues) spans 284–293 (HKRQQEEAST). The tract at residues 284–305 (HKRQQEEASTRRNLLGSGDRSD) is disordered.

It belongs to the prokaryotic/mitochondrial release factor family. Post-translationally, methylated by PrmC. Methylation increases the termination efficiency of RF1.

Its subcellular location is the cytoplasm. In terms of biological role, peptide chain release factor 1 directs the termination of translation in response to the peptide chain termination codons UAG and UAA. The protein is Peptide chain release factor 1 of Pectobacterium atrosepticum (strain SCRI 1043 / ATCC BAA-672) (Erwinia carotovora subsp. atroseptica).